Consider the following 271-residue polypeptide: Phosphatidylinositol transfer protein beta isoform (271 aa).

Lys215 is modified (N6-acetyllysine). Ser262 is subject to Phosphoserine.

This sequence belongs to the PtdIns transfer protein family. PI transfer class I subfamily. Post-translationally, constitutive phosphorylation of Ser-262 has no effect on phospholipid transfer activity but is required for Golgi targeting. Widely expressed in various tissues including brain.

Its subcellular location is the golgi apparatus. It is found in the golgi apparatus membrane. The protein resides in the endoplasmic reticulum membrane. It carries out the reaction a 1,2-diacyl-sn-glycero-3-phosphocholine(in) = a 1,2-diacyl-sn-glycero-3-phosphocholine(out). The enzyme catalyses a 1,2-diacyl-sn-glycero-3-phospho-(1D-myo-inositol)(in) = a 1,2-diacyl-sn-glycero-3-phospho-(1D-myo-inositol)(out). It catalyses the reaction an N-(acyl)-sphingosylphosphocholine(in) = an N-(acyl)-sphingosylphosphocholine(out). Phosphatidylinositol transfer activity is inhibited by N-ethylmaleimide. Its function is as follows. Catalyzes the transfer of phosphatidylinositol and phosphatidylcholine between membranes. Also catalyzes the transfer of sphingomyelin. Required for COPI-mediated retrograde transport from the Golgi to the endoplasmic reticulum; phosphatidylinositol and phosphatidylcholine transfer activity is essential for this function. The chain is Phosphatidylinositol transfer protein beta isoform (PITPNB) from Homo sapiens (Human).